The primary structure comprises 232 residues: Ribonuclease 3 (232 aa).

Residues 6–133 (FNDIENRLGV…VIAAVYLDKG (128 aa)) enclose the RNase III domain. Mg(2+) is bound at residue Glu-46. Asp-50 is an active-site residue. Residues Asp-119 and Glu-122 each contribute to the Mg(2+) site. Glu-122 is an active-site residue. In terms of domain architecture, DRBM spans 160–229 (DFKTKLQELL…AKEALKRLEK (70 aa)).

This sequence belongs to the ribonuclease III family. In terms of assembly, homodimer. Requires Mg(2+) as cofactor.

It localises to the cytoplasm. It catalyses the reaction Endonucleolytic cleavage to 5'-phosphomonoester.. Functionally, digests double-stranded RNA. Involved in the processing of primary rRNA transcript to yield the immediate precursors to the large and small rRNAs (23S and 16S). Processes some mRNAs, and tRNAs when they are encoded in the rRNA operon. Processes pre-crRNA and tracrRNA of type II CRISPR loci if present in the organism. This is Ribonuclease 3 from Clostridium botulinum (strain Eklund 17B / Type B).